The following is a 494-amino-acid chain: MQVIETLAEGLKREIKVVIPAKDMQDKMNERLADVKDKVRINGFRPGKVPAAHLKKVYGKSIMADLVNEIVREQPAAILSSRGEKSATQPEIAMTEDKDEADKILAAEQDFEFTLSYEVLPPIELKSVKGIKVTREVIDISDDEVNEQVLKVAESARAYETKTGKAANGDRITMDYVGKVDGEAFEGGTDQGAELVLGSGRFIPGFEDQLVGVKAGAEKTITVTFPADYPAKNLAGKEATFDVTVKEVAAPADVEINDELASKLGIESADRLKEIVRGQIESQYGSLTRQKLKRQILDQLDEMYKFETPNSLVDAEYNGIWSQVNNDLAQSGKTFEDEDTTEEKAREEYKTLAERRVRLGLVLSEIGEKAGVEVSEDEMQRAIYDQLRQYPGQEKQILEFFRSQPGAAASIRAPIFEEKVIDHLLTEIDVTDKKVTKEELLAEEEGEAKAETKKAAPKKKAAAKAEAADAGEGEEAAPKKKAAPKKKAADESAE.

The PPIase FKBP-type domain maps to 169–254; the sequence is GDRITMDYVG…VKEVAAPADV (86 aa). The interval 441 to 494 is disordered; the sequence is LAEEEGEAKAETKKAAPKKKAAAKAEAADAGEGEEAAPKKKAAPKKKAADESAE.

This sequence belongs to the FKBP-type PPIase family. Tig subfamily.

Its subcellular location is the cytoplasm. It carries out the reaction [protein]-peptidylproline (omega=180) = [protein]-peptidylproline (omega=0). In terms of biological role, involved in protein export. Acts as a chaperone by maintaining the newly synthesized protein in an open conformation. Functions as a peptidyl-prolyl cis-trans isomerase. In Rhizobium johnstonii (strain DSM 114642 / LMG 32736 / 3841) (Rhizobium leguminosarum bv. viciae), this protein is Trigger factor.